The chain runs to 358 residues: Alanine racemase, biosynthetic (358 aa).

Lysine 34 acts as the Proton acceptor; specific for D-alanine in catalysis. Residue lysine 34 is modified to N6-(pyridoxal phosphate)lysine. Arginine 130 is a substrate binding site. The active-site Proton acceptor; specific for L-alanine is tyrosine 254. Methionine 302 contributes to the substrate binding site.

It belongs to the alanine racemase family. Requires pyridoxal 5'-phosphate as cofactor.

The catalysed reaction is L-alanine = D-alanine. Its pathway is amino-acid biosynthesis; D-alanine biosynthesis; D-alanine from L-alanine: step 1/1. It participates in cell wall biogenesis; peptidoglycan biosynthesis. Functionally, catalyzes the interconversion of L-alanine and D-alanine. Provides the D-alanine required for cell wall biosynthesis. The chain is Alanine racemase, biosynthetic (alr) from Pseudomonas aeruginosa (strain ATCC 15692 / DSM 22644 / CIP 104116 / JCM 14847 / LMG 12228 / 1C / PRS 101 / PAO1).